Reading from the N-terminus, the 348-residue chain is Protein RecA (348 aa).

Residue 68–75 (GPESSGKT) participates in ATP binding.

It belongs to the RecA family.

It is found in the cytoplasm. Functionally, can catalyze the hydrolysis of ATP in the presence of single-stranded DNA, the ATP-dependent uptake of single-stranded DNA by duplex DNA, and the ATP-dependent hybridization of homologous single-stranded DNAs. It interacts with LexA causing its activation and leading to its autocatalytic cleavage. The protein is Protein RecA of Rhodococcus opacus (strain B4).